The chain runs to 264 residues: L-aspartate dehydrogenase (264 aa).

Positions 120 and 186 each coordinate NAD(+). Histidine 216 is an active-site residue.

Belongs to the L-aspartate dehydrogenase family.

It carries out the reaction L-aspartate + NADP(+) + H2O = oxaloacetate + NH4(+) + NADPH + H(+). It catalyses the reaction L-aspartate + NAD(+) + H2O = oxaloacetate + NH4(+) + NADH + H(+). It functions in the pathway cofactor biosynthesis; NAD(+) biosynthesis; iminoaspartate from L-aspartate (dehydrogenase route): step 1/1. Functionally, specifically catalyzes the NAD or NADP-dependent dehydrogenation of L-aspartate to iminoaspartate. The polypeptide is L-aspartate dehydrogenase (Serratia proteamaculans (strain 568)).